Here is a 753-residue protein sequence, read N- to C-terminus: Small G protein signaling modulator 3 homolog (753 aa).

One can recognise a Rab-GAP TBC domain in the interval 115-306; it reads GIPHSMRPQL…RIWDFFFYQG (192 aa). An SH3 domain is found at 482–541; it reads SRRRRAKALLDFERHDDDELGFRKNDIITIISQKDEHCWVGELNGLRGWFPAKFVDILDE. The RUN domain maps to 557–720; sequence GITDLIRGTL…FAFSLSPDWE (164 aa).

Belongs to the small G protein signaling modulator family.

In Xenopus laevis (African clawed frog), this protein is Small G protein signaling modulator 3 homolog (sgsm3).